The sequence spans 58 residues: Large ribosomal subunit protein bL32c (58 aa).

The disordered stretch occupies residues 1–23; it reads MAVPKKRTSKAKKNARKSVWKKK.

The protein belongs to the bacterial ribosomal protein bL32 family.

It is found in the plastid. Its subcellular location is the chloroplast. The chain is Large ribosomal subunit protein bL32c (rpl32-A) from Trieres chinensis (Marine centric diatom).